The chain runs to 500 residues: Glycerol kinase (500 aa).

ADP is bound at residue threonine 15. Residues threonine 15, threonine 16, and serine 17 each contribute to the ATP site. Threonine 15 provides a ligand contact to sn-glycerol 3-phosphate. Arginine 19 is an ADP binding site. Residues arginine 85, glutamate 86, tyrosine 137, and aspartate 245 each contribute to the sn-glycerol 3-phosphate site. Glycerol contacts are provided by arginine 85, glutamate 86, tyrosine 137, aspartate 245, and glutamine 246. Threonine 267 and glycine 310 together coordinate ADP. Residues threonine 267, glycine 310, glutamine 314, and glycine 411 each contribute to the ATP site. Residues glycine 411 and asparagine 415 each coordinate ADP.

The protein belongs to the FGGY kinase family.

It carries out the reaction glycerol + ATP = sn-glycerol 3-phosphate + ADP + H(+). It participates in polyol metabolism; glycerol degradation via glycerol kinase pathway; sn-glycerol 3-phosphate from glycerol: step 1/1. Its activity is regulated as follows. Inhibited by fructose 1,6-bisphosphate (FBP). Functionally, key enzyme in the regulation of glycerol uptake and metabolism. Catalyzes the phosphorylation of glycerol to yield sn-glycerol 3-phosphate. This Aeromonas salmonicida (strain A449) protein is Glycerol kinase.